The following is a 1072-amino-acid chain: Carbamoyl phosphate synthase large chain (1072 aa).

The tract at residues 1–401 (MPKRLDINTI…SLLKAVRSLE (401 aa)) is carboxyphosphate synthetic domain. Arg-129, Arg-169, Gly-175, Gly-176, Lys-208, Ile-210, Glu-215, Gly-241, Val-242, His-243, Gln-284, and Glu-298 together coordinate ATP. Residues 133–327 (RTLMQDLNEP…IAKLAAKIAV (195 aa)) form the ATP-grasp 1 domain. Positions 284, 298, and 300 each coordinate Mg(2+). Mn(2+)-binding residues include Gln-284, Glu-298, and Asn-300. Residues 402 to 546 (LGIYHLELDH…YSTYADENES (145 aa)) form an oligomerization domain region. The tract at residues 547–929 (IVTDRKSVVV…ALYKGLVASG (383 aa)) is carbamoyl phosphate synthetic domain. An ATP-grasp 2 domain is found at 671–861 (EAALTKLGIP…MANVATKVIL (191 aa)). Positions 707, 746, 752, 777, 778, 779, 780, 820, and 832 each coordinate ATP. Mg(2+) contacts are provided by Gln-820, Glu-832, and Asn-834. 3 residues coordinate Mn(2+): Gln-820, Glu-832, and Asn-834. Positions 930–1072 (INIPTHGSVI…QTKRHEVVHA (143 aa)) constitute an MGS-like domain. Residues 930 to 1072 (INIPTHGSVI…QTKRHEVVHA (143 aa)) form an allosteric domain region.

It belongs to the CarB family. In terms of assembly, composed of two chains; the small (or glutamine) chain promotes the hydrolysis of glutamine to ammonia, which is used by the large (or ammonia) chain to synthesize carbamoyl phosphate. Tetramer of heterodimers (alpha,beta)4. Requires Mg(2+) as cofactor. Mn(2+) serves as cofactor.

It carries out the reaction hydrogencarbonate + L-glutamine + 2 ATP + H2O = carbamoyl phosphate + L-glutamate + 2 ADP + phosphate + 2 H(+). The enzyme catalyses hydrogencarbonate + NH4(+) + 2 ATP = carbamoyl phosphate + 2 ADP + phosphate + 2 H(+). The protein operates within amino-acid biosynthesis; L-arginine biosynthesis; carbamoyl phosphate from bicarbonate: step 1/1. Its pathway is pyrimidine metabolism; UMP biosynthesis via de novo pathway; (S)-dihydroorotate from bicarbonate: step 1/3. Functionally, large subunit of the glutamine-dependent carbamoyl phosphate synthetase (CPSase). CPSase catalyzes the formation of carbamoyl phosphate from the ammonia moiety of glutamine, carbonate, and phosphate donated by ATP, constituting the first step of 2 biosynthetic pathways, one leading to arginine and/or urea and the other to pyrimidine nucleotides. The large subunit (synthetase) binds the substrates ammonia (free or transferred from glutamine from the small subunit), hydrogencarbonate and ATP and carries out an ATP-coupled ligase reaction, activating hydrogencarbonate by forming carboxy phosphate which reacts with ammonia to form carbamoyl phosphate. The protein is Carbamoyl phosphate synthase large chain of Bacillus cereus (strain ATCC 14579 / DSM 31 / CCUG 7414 / JCM 2152 / NBRC 15305 / NCIMB 9373 / NCTC 2599 / NRRL B-3711).